The primary structure comprises 91 residues: ATP synthase subunit c (91 aa).

2 helical membrane passes run 4-24 (FTMCVLAAGIGMALGTLGTGI) and 53-73 (IGLAMIESLAIYALVVCLIIL).

This sequence belongs to the ATPase C chain family. As to quaternary structure, F-type ATPases have 2 components, F(1) - the catalytic core - and F(0) - the membrane proton channel. F(1) has five subunits: alpha(3), beta(3), gamma(1), delta(1), epsilon(1). F(0) has three main subunits: a(1), b(2) and c(10-14). The alpha and beta chains form an alternating ring which encloses part of the gamma chain. F(1) is attached to F(0) by a central stalk formed by the gamma and epsilon chains, while a peripheral stalk is formed by the delta and b chains.

It localises to the cell inner membrane. In terms of biological role, f(1)F(0) ATP synthase produces ATP from ADP in the presence of a proton or sodium gradient. F-type ATPases consist of two structural domains, F(1) containing the extramembraneous catalytic core and F(0) containing the membrane proton channel, linked together by a central stalk and a peripheral stalk. During catalysis, ATP synthesis in the catalytic domain of F(1) is coupled via a rotary mechanism of the central stalk subunits to proton translocation. Functionally, key component of the F(0) channel; it plays a direct role in translocation across the membrane. A homomeric c-ring of between 10-14 subunits forms the central stalk rotor element with the F(1) delta and epsilon subunits. This Geotalea daltonii (strain DSM 22248 / JCM 15807 / FRC-32) (Geobacter daltonii) protein is ATP synthase subunit c.